A 146-amino-acid chain; its full sequence is MMDINEIREYLPHRYPFLLVDRVTELDFEAQSIRAYKNVSINEPFFNGHFPAHPIMPGVLIIEAMAQAAGILGFKMLDAKPADGTLYYFVGSDKLRFRQPVLPGDQLVLEAKFLSRKSMIWKFECRALVDGKPVCSAEITCAERSL.

His49 is an active-site residue.

Belongs to the thioester dehydratase family. FabZ subfamily.

Its subcellular location is the cytoplasm. The enzyme catalyses a (3R)-hydroxyacyl-[ACP] = a (2E)-enoyl-[ACP] + H2O. Its function is as follows. Involved in unsaturated fatty acids biosynthesis. Catalyzes the dehydration of short chain beta-hydroxyacyl-ACPs and long chain saturated and unsaturated beta-hydroxyacyl-ACPs. In Pseudomonas entomophila (strain L48), this protein is 3-hydroxyacyl-[acyl-carrier-protein] dehydratase FabZ.